A 249-amino-acid chain; its full sequence is ATP synthase subunit a, chloroplastic (249 aa).

5 helical membrane-spanning segments follow: residues 40-60, 97-117, 136-156, 201-221, and 222-242; these read QVLI…VLAV, VPFI…GALL, INTT…AGLS, LVVV…VMFL, and GLFT…AYIG.

It belongs to the ATPase A chain family. In terms of assembly, F-type ATPases have 2 components, CF(1) - the catalytic core - and CF(0) - the membrane proton channel. CF(1) has five subunits: alpha(3), beta(3), gamma(1), delta(1), epsilon(1). CF(0) has four main subunits: a, b, b' and c.

Its subcellular location is the plastid. It localises to the chloroplast thylakoid membrane. Its function is as follows. Key component of the proton channel; it plays a direct role in the translocation of protons across the membrane. This is ATP synthase subunit a, chloroplastic from Arabis hirsuta (Hairy rock-cress).